The chain runs to 426 residues: Methionine aminopeptidase 2 (426 aa).

The tract at residues methionine 1–glycine 72 is disordered. The span at threonine 10–glutamate 34 shows a compositional bias: basic and acidic residues. Residues lysine 47–lysine 60 show a composition bias toward basic residues. Residue histidine 179 participates in substrate binding. Aspartate 199, aspartate 210, and histidine 279 together coordinate a divalent metal cation. Histidine 287 contacts substrate. Residues glutamate 312 and glutamate 407 each coordinate a divalent metal cation.

It belongs to the peptidase M24A family. Methionine aminopeptidase eukaryotic type 2 subfamily. Co(2+) serves as cofactor. It depends on Zn(2+) as a cofactor. Mn(2+) is required as a cofactor. Requires Fe(2+) as cofactor.

It is found in the cytoplasm. The catalysed reaction is Release of N-terminal amino acids, preferentially methionine, from peptides and arylamides.. Functionally, cotranslationally removes the N-terminal methionine from nascent proteins. The N-terminal methionine is often cleaved when the second residue in the primary sequence is small and uncharged (Met-Ala-, Cys, Gly, Pro, Ser, Thr, or Val). The sequence is that of Methionine aminopeptidase 2 (fma2) from Schizosaccharomyces pombe (strain 972 / ATCC 24843) (Fission yeast).